The chain runs to 323 residues: tRNA dimethylallyltransferase (323 aa).

An ATP-binding site is contributed by 13-20; it reads GPTASGKT. 15-20 is a substrate binding site; that stretch reads TASGKT. Interaction with substrate tRNA regions lie at residues 42–45, 166–170, 251–256, and 284–291; these read DSAL, QRIQR, RCVGYR, and KRQITWLR.

The protein belongs to the IPP transferase family. As to quaternary structure, monomer. Requires Mg(2+) as cofactor.

It catalyses the reaction adenosine(37) in tRNA + dimethylallyl diphosphate = N(6)-dimethylallyladenosine(37) in tRNA + diphosphate. In terms of biological role, catalyzes the transfer of a dimethylallyl group onto the adenine at position 37 in tRNAs that read codons beginning with uridine, leading to the formation of N6-(dimethylallyl)adenosine (i(6)A). The chain is tRNA dimethylallyltransferase from Acidovorax ebreus (strain TPSY) (Diaphorobacter sp. (strain TPSY)).